A 279-amino-acid chain; its full sequence is Thermitase (279 aa).

Asp5 contributes to the Ca(2+) binding site. A Peptidase S8 domain is found at 12-277 (QYGPQKIQAP…KGRVNAYKAV (266 aa)). Asp38 functions as the Charge relay system in the catalytic mechanism. Ca(2+)-binding residues include Asp47, Asp57, Asp60, Asp62, Thr64, and Gln66. His71 acts as the Charge relay system in catalysis. Residues Val82, Asn85, Thr87, and Ile89 each coordinate Ca(2+). Residues Ala173, Tyr175, and Ala178 each coordinate Na(+). Ca(2+)-binding residues include Val199 and Asp201. Asp201 contributes to the Na(+) binding site. The active-site Charge relay system is Ser225.

The protein belongs to the peptidase S8 family. Ca(2+) is required as a cofactor. The cofactor is Na(+).

It localises to the secreted. It catalyses the reaction Hydrolysis of proteins, including collagen.. The protein is Thermitase of Thermoactinomyces vulgaris.